The sequence spans 342 residues: 4-hydroxy-2-oxovalerate aldolase 2 (342 aa).

In terms of domain architecture, Pyruvate carboxyltransferase spans 8–260; the sequence is ITVHDMTLRD…ETGVDVFKIQ (253 aa). Position 16–17 (16–17) interacts with substrate; sequence RD. Asp-17 is a Mn(2+) binding site. His-20 (proton acceptor) is an active-site residue. Ser-170 and His-199 together coordinate substrate. Residues His-199 and His-201 each coordinate Mn(2+). Residue Tyr-290 coordinates substrate.

It belongs to the 4-hydroxy-2-oxovalerate aldolase family.

The enzyme catalyses (S)-4-hydroxy-2-oxopentanoate = acetaldehyde + pyruvate. This is 4-hydroxy-2-oxovalerate aldolase 2 (mhpE) from Azoarcus sp. (strain BH72).